The primary structure comprises 171 residues: uncharacterized protein (171 aa).

The first 17 residues, Met-1–Gly-17, serve as a signal peptide directing secretion.

In terms of biological role, part of the elfADCG-ycbUVF fimbrial operon, which promotes adhesion of bacteria to different abiotic surfaces. This is an uncharacterized protein from Escherichia coli (strain K12).